The primary structure comprises 275 residues: Large ribosomal subunit protein uL2cz (275 aa).

Disordered stretches follow at residues 1–20 (MAIHLYKTSTPSTRNGAVDS) and 225–275 (NPVD…RRSK).

The protein belongs to the universal ribosomal protein uL2 family. Part of the 50S ribosomal subunit.

Its subcellular location is the plastid. The protein resides in the chloroplast. This chain is Large ribosomal subunit protein uL2cz (rpl2-A), found in Populus alba (White poplar).